The chain runs to 423 residues: Exodeoxyribonuclease 7 large subunit (423 aa).

Belongs to the XseA family. As to quaternary structure, heterooligomer composed of large and small subunits.

It localises to the cytoplasm. The enzyme catalyses Exonucleolytic cleavage in either 5'- to 3'- or 3'- to 5'-direction to yield nucleoside 5'-phosphates.. Functionally, bidirectionally degrades single-stranded DNA into large acid-insoluble oligonucleotides, which are then degraded further into small acid-soluble oligonucleotides. This is Exodeoxyribonuclease 7 large subunit from Natranaerobius thermophilus (strain ATCC BAA-1301 / DSM 18059 / JW/NM-WN-LF).